A 780-amino-acid polypeptide reads, in one-letter code: Neutral ceramidase (780 aa).

Topologically, residues 1–12 are cytoplasmic; the sequence is MAKRTFSNLETF. The chain crosses the membrane as a helical; Signal-anchor for type II membrane protein span at residues 13 to 33; the sequence is LIFLLVMMSAITVALLSLLFI. At 34 to 780 the chain is on the lumenal side; it reads TSGTIENHKD…TSPAFEVVTI (747 aa). The disordered stretch occupies residues 47-90; the sequence is HFFSTTQSPPATQGSTAAQRSTATQHSTATQSSTATQTSPVPLT. Positions 57–85 are enriched in low complexity; it reads ATQGSTAAQRSTATQHSTATQSSTATQTS. Thr62 carries an O-linked (GalNAc...) threonine glycan. O-linked (GalNAc...) serine glycosylation is present at Ser67. Thr68 and Thr70 each carry an O-linked (GalNAc...) threonine glycan. Ser73 carries an O-linked (GalNAc...) serine glycan. O-linked (GalNAc...) threonine glycans are attached at residues Thr74 and Thr76. Residues Ser78 and Ser79 are each glycosylated (O-linked (GalNAc...) serine). O-linked (GalNAc...) threonine glycosylation is found at Thr80, Thr82, and Thr84. The N-linked (GlcNAc...) asparagine glycan is linked to Asn98. Leu134 is a Ca(2+) binding site. Asn151 carries N-linked (GlcNAc...) asparagine glycosylation. His194 is a Zn(2+) binding site. Residue Asn217 is glycosylated (N-linked (GlcNAc...) asparagine). His303 provides a ligand contact to Zn(2+). N-linked (GlcNAc...) asparagine glycosylation is present at Asn308. The active-site Nucleophile is Ser354. Intrachain disulfides connect Cys362–Cys376 and Cys369–Cys384. N-linked (GlcNAc...) asparagine glycans are attached at residues Asn440 and Asn468. A disulfide bridge connects residues Cys448 and Cys498. Glu540 is a binding site for Zn(2+). The N-linked (GlcNAc...) asparagine glycan is linked to Asn564. Residue Tyr579 coordinates Zn(2+). Ca(2+) contacts are provided by Asp712, Ser714, and Thr717. Asn730 carries N-linked (GlcNAc...) asparagine glycosylation. Positions 770-780 are required for correct folding and localization; the sequence is GTSPAFEVVTI. A glycan (O-linked (GalNAc...) threonine) is linked at Thr779.

It belongs to the neutral ceramidase family. Zn(2+) serves as cofactor. In terms of processing, proteolytic cleavage of the N-terminus removes the signal-anchor and produces a soluble form of the protein. Post-translationally, N-glycosylated. Required for enzyme activity. O-glycosylated. Required to retain it as a type II membrane protein at the cell surface. In terms of processing, phosphorylated. May prevent ubiquitination and subsequent degradation. Post-translationally, ubiquitinated, leading to its degradation by the proteasome. Ubiquitination is triggered by nitric oxide. In terms of tissue distribution, primarily expressed in intestine. Ubiquitously expressed with higher levels in kidney, skeletal muscle and heart. The ubiquitous expression observed for ASAH2 might be an experimental artifact due to the paralog ASAH2B.

It is found in the cell membrane. The protein localises to the membrane raft. Its subcellular location is the membrane. The protein resides in the caveola. It localises to the golgi apparatus membrane. It is found in the mitochondrion. The protein localises to the secreted. Its subcellular location is the extracellular exosome. It catalyses the reaction an N-acylsphing-4-enine + H2O = sphing-4-enine + a fatty acid. It carries out the reaction N-dodecanoylsphing-4-enine + H2O = dodecanoate + sphing-4-enine. The enzyme catalyses N-hexadecanoylsphing-4-enine + H2O = sphing-4-enine + hexadecanoate. The catalysed reaction is N-octanoylsphing-4-enine + H2O = octanoate + sphing-4-enine. It catalyses the reaction N-(hexanoyl)sphing-4-enine + H2O = hexanoate + sphing-4-enine. It carries out the reaction N-octadecanoylsphing-4-enine + H2O = sphing-4-enine + octadecanoate. The enzyme catalyses N-tetradecanoylsphing-4-enine + H2O = tetradecanoate + sphing-4-enine. The catalysed reaction is N-(9Z-octadecenoyl)-sphing-4-enine + H2O = sphing-4-enine + (9Z)-octadecenoate. It catalyses the reaction N-(15Z-tetracosenoyl)-sphing-4-enine + H2O = (15Z)-tetracosenoate + sphing-4-enine. It carries out the reaction sphinganine + hexadecanoate = N-hexadecanoylsphinganine + H2O. The enzyme catalyses N-(octadecanoyl)-sphinganine + H2O = sphinganine + octadecanoate. The protein operates within lipid metabolism; sphingolipid metabolism. With respect to regulation, inhibited by dithiothreitol (DTT) and 2-mercaptoethanol. Activity is mildly stimulated by Ca(2+) and Mg(2+), but is not inhibited by EDTA. Activity is inhibited by millimolar levels of Fe(2+), Zn(2+) and Cu(2+). Inhibited by cholesterol. Plasma membrane ceramidase that hydrolyzes sphingolipid ceramides into sphingosine and free fatty acids at neutral pH. Ceramides, sphingosine, and its phosphorylated form sphingosine-1-phosphate are bioactive lipids that mediate cellular signaling pathways regulating several biological processes including cell proliferation, apoptosis and differentiation. Also catalyzes the reverse reaction allowing the synthesis of ceramides from fatty acids and sphingosine. Together with sphingomyelinase, participates in the production of sphingosine and sphingosine-1-phosphate from the degradation of sphingomyelin, a sphingolipid enriched in the plasma membrane of cells. Also participates in the hydrolysis of ceramides from the extracellular milieu allowing the production of sphingosine-1-phosphate inside and outside cells. This is the case for instance with the digestion of dietary sphingolipids in the intestinal tract. In Homo sapiens (Human), this protein is Neutral ceramidase (ASAH2).